A 421-amino-acid chain; its full sequence is uncharacterized protein (421 aa).

In terms of domain architecture, TRAM spans 14–72 (DLTKGDTITVEVTRPAHGGEGIAHHGGRVIFVRGGFPGDDVDVEITQVKKRFARGFVVQ). Residues Q250, Y286, E308, and D349 each coordinate S-adenosyl-L-methionine. Catalysis depends on C376, which acts as the Nucleophile.

It belongs to the class I-like SAM-binding methyltransferase superfamily. RNA M5U methyltransferase family.

This is an uncharacterized protein from Corynebacterium efficiens (strain DSM 44549 / YS-314 / AJ 12310 / JCM 11189 / NBRC 100395).